The chain runs to 501 residues: Cell division control protein 24 (501 aa).

As to quaternary structure, interacts with dna2, pcn1 and rfc1.

It localises to the nucleus. Its subcellular location is the cytoplasm. Its function is as follows. Has a role in the progression of DNA replication and in the maintenance of genomic integrity. Acts during S phase, after initiation, where it is essential for completion. This is Cell division control protein 24 (cdc24) from Schizosaccharomyces pombe (strain 972 / ATCC 24843) (Fission yeast).